The chain runs to 433 residues: Histidinol dehydrogenase (433 aa).

Residues Tyr-133, Gln-194, and Asn-217 each coordinate NAD(+). Substrate is bound by residues Ser-240, Gln-262, and His-265. Positions 262 and 265 each coordinate Zn(2+). Active-site proton acceptor residues include Glu-330 and His-331. His-331, Asp-364, Glu-418, and His-423 together coordinate substrate. Asp-364 serves as a coordination point for Zn(2+). Position 423 (His-423) interacts with Zn(2+).

Belongs to the histidinol dehydrogenase family. Requires Zn(2+) as cofactor.

It carries out the reaction L-histidinol + 2 NAD(+) + H2O = L-histidine + 2 NADH + 3 H(+). It participates in amino-acid biosynthesis; L-histidine biosynthesis; L-histidine from 5-phospho-alpha-D-ribose 1-diphosphate: step 9/9. Catalyzes the sequential NAD-dependent oxidations of L-histidinol to L-histidinaldehyde and then to L-histidine. This is Histidinol dehydrogenase from Hydrogenovibrio crunogenus (strain DSM 25203 / XCL-2) (Thiomicrospira crunogena).